An 830-amino-acid polypeptide reads, in one-letter code: Serine/threonine-protein kinase pkn2 (830 aa).

Over 1–605 (MLAPDSLVLD…GELLRQRRRE (605 aa)) the chain is Cytoplasmic. In terms of domain architecture, Protein kinase spans 13 to 283 (FRVLRPLGSG…DALAAAHSAL (271 aa)). Residues 19–27 (LGSGGMGEV) and Lys42 each bind ATP. Catalysis depends on Asp135, which acts as the Proton acceptor. Residues 296-326 (VPQPGSGATPSSGTSVFGTGSASGSSSGPTG) are disordered. The segment covering 299–326 (PGSGATPSSGTSVFGTGSASGSSSGPTG) has biased composition (low complexity). Residues 396-511 (TVMLTDIQGF…EPMEVIEAVE (116 aa)) enclose the Guanylate cyclase domain. Residues 606–623 (AALVAGAVVLLGAGAAWL) traverse the membrane as a helical segment. At 624–830 (SQRNDAGTRA…AIKSLKQKSD (207 aa)) the chain is on the periplasmic side.

This sequence belongs to the protein kinase superfamily. Ser/Thr protein kinase family.

The protein localises to the cell membrane. It carries out the reaction L-seryl-[protein] + ATP = O-phospho-L-seryl-[protein] + ADP + H(+). The catalysed reaction is L-threonyl-[protein] + ATP = O-phospho-L-threonyl-[protein] + ADP + H(+). Regulates the activity of endogenous beta-lactamase or related enzymes, by blocking their secretion by phosphorylation, in response to an external signal yet to be identified. The sequence is that of Serine/threonine-protein kinase pkn2 (pkn2) from Myxococcus xanthus.